The sequence spans 1445 residues: Protein HUA2-LIKE 1 (1445 aa).

The PWWP domain occupies 20 to 77 (LGDLVLAKVKGFPAWPAKIGQPEDWNQAPDPKKHFVQFYGTGEIGFVTPPDIQPFTSE). Disordered stretches follow at residues 133–197 (KYLN…SPDP), 211–302 (TCTD…DLNI), 319–356 (FENE…SKRL), 409–439 (EHTS…SDSD), 460–491 (DDDD…ANAS), 641–685 (GIPK…TSTP), and 797–835 (LTPS…SLSG). Composition is skewed to polar residues over residues 173-187 (QDSS…SPSS) and 211-225 (TCTD…NLVN). Basic and acidic residues-rich tracts occupy residues 228 to 257 (RIIR…RAAT), 274 to 293 (GQDH…ESSD), and 331 to 350 (DESK…DQKQ). 2 stretches are compositionally biased toward polar residues: residues 660–673 (RVSS…NQRS) and 797–814 (LTPS…QAGT). The region spanning 838 to 979 (EAAISRDTFE…RYIGDLGASG (142 aa)) is the CID domain. Residues 1110 to 1203 (PATTCATELP…SLPLQPGFAP (94 aa)) form a disordered region. The segment covering 1124-1170 (GSPPLPHESPPSPPPQPPSSPPPPSSPPQLAPAPPPSDHCLPPPTAP) has biased composition (pro residues).

In terms of tissue distribution, expressed throughout young primordia, and vegetative and reproductive apices.

Its subcellular location is the nucleus. Functionally, probable transcription factor that acts with partial redundancy with HULK2 and HULK3. Plays diverse and essential roles in the control of plant development, physiology and flowering time. This chain is Protein HUA2-LIKE 1, found in Arabidopsis thaliana (Mouse-ear cress).